The primary structure comprises 218 residues: Probable nicotinate-nucleotide adenylyltransferase (218 aa).

This sequence belongs to the NadD family.

The catalysed reaction is nicotinate beta-D-ribonucleotide + ATP + H(+) = deamido-NAD(+) + diphosphate. Its pathway is cofactor biosynthesis; NAD(+) biosynthesis; deamido-NAD(+) from nicotinate D-ribonucleotide: step 1/1. Functionally, catalyzes the reversible adenylation of nicotinate mononucleotide (NaMN) to nicotinic acid adenine dinucleotide (NaAD). This is Probable nicotinate-nucleotide adenylyltransferase from Burkholderia lata (strain ATCC 17760 / DSM 23089 / LMG 22485 / NCIMB 9086 / R18194 / 383).